Consider the following 463-residue polypeptide: Chaperone SurA (463 aa).

The signal sequence occupies residues 1–25 (MTKPFSVVLASLLAITSTISPLASA). 2 PpiC domains span residues 174-276 (GSKY…KLME) and 289-388 (VTEY…QRVG). Disordered regions lie at residues 329–348 (ATAKESSEDTNSRGQGGDLG) and 434–463 (GDRADNNATAAPAKSADPALPAPPPAKPTR). Over residues 439 to 452 (NNATAAPAKSADPA) the composition is skewed to low complexity. The segment covering 453–463 (LPAPPPAKPTR) has biased composition (pro residues).

It is found in the periplasm. The catalysed reaction is [protein]-peptidylproline (omega=180) = [protein]-peptidylproline (omega=0). Its function is as follows. Chaperone involved in the correct folding and assembly of outer membrane proteins. Recognizes specific patterns of aromatic residues and the orientation of their side chains, which are found more frequently in integral outer membrane proteins. May act in both early periplasmic and late outer membrane-associated steps of protein maturation. This is Chaperone SurA from Xanthomonas oryzae pv. oryzae (strain MAFF 311018).